A 327-amino-acid polypeptide reads, in one-letter code: D-alanine--D-alanine ligase (327 aa).

Residues 113-312 enclose the ATP-grasp domain; that stretch reads KRLWMTHGLA…YEDFVLQVLA (200 aa). Position 139–194 (139–194) interacts with ATP; the sequence is VADLGLPLIVKPAREGSSIGLTKVTAADQMRAAFDKAAALDNDVIAETFVDGAELT. Residues Asp-266, Glu-279, and Asn-281 each contribute to the Mg(2+) site.

The protein belongs to the D-alanine--D-alanine ligase family. Requires Mg(2+) as cofactor. The cofactor is Mn(2+).

The protein localises to the cytoplasm. The catalysed reaction is 2 D-alanine + ATP = D-alanyl-D-alanine + ADP + phosphate + H(+). It functions in the pathway cell wall biogenesis; peptidoglycan biosynthesis. In terms of biological role, cell wall formation. The chain is D-alanine--D-alanine ligase from Cupriavidus taiwanensis (strain DSM 17343 / BCRC 17206 / CCUG 44338 / CIP 107171 / LMG 19424 / R1) (Ralstonia taiwanensis (strain LMG 19424)).